The chain runs to 223 residues: Serine/threonine/tyrosine-interacting protein (223 aa).

The region spanning 28-176 (EMQEILPGLF…LQEYEAIYLA (149 aa)) is the Tyrosine-protein phosphatase domain. The Interaction with FBXW7 motif lies at 76-78 (FQQ). A phosphoserine mark is found at Ser-184, Ser-193, and Ser-201. The disordered stretch occupies residues 197-223 (GTTGSLKRTHEEEDDFGTMQVATAQNG).

It belongs to the protein-tyrosine phosphatase family. Non-receptor class subfamily. In terms of assembly, interacts with MAPK1; independently of MAPK1 phosphorylation status. Interacts with CARHSP1/Crhsp-24. Interacts (via FQQ motif) with FBXW7 (via F-box domain); the interaction is direct and prevents FBXW7 interaction with SKP1, a component of the SCF(FBXW7) complex.

It localises to the nucleus. Its subcellular location is the cytoplasm. The protein resides in the cytosol. In terms of biological role, catalytically inactive phosphatase. Acts as a nuclear anchor for MAPK1/MAPK3 (ERK1/ERK2). Modulates cell-fate decisions and cell migration by spatiotemporal regulation of MAPK1/MAPK3 (ERK1/ERK2). By binding to the F-box of FBXW7, prevents the assembly of FBXW7 into the SCF E3 ubiquitin-protein ligase complex, and thereby inhibits degradation of its substrates. Plays a role in spermatogenesis. In Pongo abelii (Sumatran orangutan), this protein is Serine/threonine/tyrosine-interacting protein (STYX).